Reading from the N-terminus, the 178-residue chain is Cytidylate kinase 2 (178 aa).

7-15 is an ATP binding site; sequence GKSGCGNTT.

It belongs to the cytidylate kinase family. Type 2 subfamily.

It is found in the cytoplasm. The catalysed reaction is CMP + ATP = CDP + ADP. It carries out the reaction dCMP + ATP = dCDP + ADP. This Borrelia garinii subsp. bavariensis (strain ATCC BAA-2496 / DSM 23469 / PBi) (Borreliella bavariensis) protein is Cytidylate kinase 2.